We begin with the raw amino-acid sequence, 190 residues long: Dynactin subunit 6 (190 aa).

Phosphothreonine; by CDK1 is present on T186.

This sequence belongs to the dynactin subunits 5/6 family. Dynactin subunit 6 subfamily. Subunit of dynactin, a multiprotein complex part of a tripartite complex with dynein and a adapter, such as BICDL1, BICD2 or HOOK3. The dynactin complex is built around ACTR1A/ACTB filament and consists of an actin-related filament composed of a shoulder domain, a pointed end and a barbed end. Its length is defined by its flexible shoulder domain. The soulder is composed of 2 DCTN1 subunits, 4 DCTN2 and 2 DCTN3. The 4 DCNT2 (via N-terminus) bind the ACTR1A filament and act as molecular rulers to determine the length. The pointed end is important for binding dynein-dynactin cargo adapters. Consists of 4 subunits: ACTR10, DCNT4, DCTN5 and DCTN6. Within the complex DCTN6 forms a heterodimer with DCTN5. The barbed end is composed of a CAPZA1:CAPZB heterodimers, which binds ACTR1A/ACTB filament and dynactin and stabilizes dynactin. Interacts with PLK1. Interacts with N4BP2L1. Phosphorylation at Thr-186 by CDK1 during mitotic prometaphase creates a binding site for PLK1 that facilitates its recruitment to kinetochores.

It localises to the cytoplasm. Its subcellular location is the cytoskeleton. It is found in the chromosome. The protein localises to the centromere. The protein resides in the kinetochore. Part of the dynactin complex that activates the molecular motor dynein for ultra-processive transport along microtubules. This chain is Dynactin subunit 6 (DCTN6), found in Pongo abelii (Sumatran orangutan).